The following is a 310-amino-acid chain: RING-H2 finger protein ATL60 (310 aa).

A helical transmembrane segment spans residues 24-44 (VLLFSIVSIFTGILFLLLLHL). The RING-type; atypical zinc finger occupies 120 to 162 (CAVCLSDLVDGDKARVLPRCNHGFHVDCIDMWFQSHSTCPLCR). Disordered regions lie at residues 170-201 (DTTHGGSEGLPQNQNFESGHSTNQHNPSQDQS) and 240-260 (GNFAASYNDHQQESSSTRSQE). A compositionally biased stretch (polar residues) spans 179 to 201 (LPQNQNFESGHSTNQHNPSQDQS).

It belongs to the RING-type zinc finger family. ATL subfamily.

The protein localises to the membrane. It carries out the reaction S-ubiquitinyl-[E2 ubiquitin-conjugating enzyme]-L-cysteine + [acceptor protein]-L-lysine = [E2 ubiquitin-conjugating enzyme]-L-cysteine + N(6)-ubiquitinyl-[acceptor protein]-L-lysine.. It functions in the pathway protein modification; protein ubiquitination. The protein is RING-H2 finger protein ATL60 (ATL60) of Arabidopsis thaliana (Mouse-ear cress).